Here is an 85-residue protein sequence, read N- to C-terminus: Turmerin (85 aa).

Post-translationally, the N-terminus is blocked.

In terms of biological role, inhibition of trypsin. Has anticarcinogenic activity, prevents transformation of DMBA-treated JB6 cells. Has antipromoter activity, prevents promotion by tetradecanoyl phorbal acetate (TPA) in JB6 cells. Prevents tertiary butyl hydroperoxide-induced mutagenesis. Protects AT base pairs and shows antimutagenesis activity in TA102 and TA104 S.typhimurium mutagenesis tests. Inhibits paw edema formation induced by phospholipase A2 in Swiss Wistar mice. Prevents the release of arachidonate, the parent compound for the synthesis of prostaglandins and prostacyclins. Has antimalarial activity, kills P.falciparum. Has antivenom activity, nullifies the lethal effects of N.naja venom and inhibits phospholipase A2 present in N.naja venom. Has antifungal activity, inhibits cilia formation by A.niger. Is not toxic or allergenic. In Curcuma longa (Turmeric), this protein is Turmerin.